The following is a 110-amino-acid chain: Protein YcgL (110 aa).

The YcgL domain occupies 14-98 (MFCVIYRSSK…PPEDLLKQHL (85 aa)). The disordered stretch occupies residues 88–110 (PPPEDLLKQHLSSVGQNTSPADR). Over residues 97 to 110 (HLSSVGQNTSPADR) the composition is skewed to polar residues.

The protein is Protein YcgL of Salmonella paratyphi A (strain ATCC 9150 / SARB42).